The sequence spans 226 residues: Ribosome maturation factor RimM (226 aa).

The region spanning 144–225 (ADEFYWVDLI…RIVVDWEADY (82 aa)) is the PRC barrel domain.

This sequence belongs to the RimM family. As to quaternary structure, binds ribosomal protein uS19.

Its subcellular location is the cytoplasm. Its function is as follows. An accessory protein needed during the final step in the assembly of 30S ribosomal subunit, possibly for assembly of the head region. Essential for efficient processing of 16S rRNA. May be needed both before and after RbfA during the maturation of 16S rRNA. It has affinity for free ribosomal 30S subunits but not for 70S ribosomes. In Burkholderia ambifaria (strain ATCC BAA-244 / DSM 16087 / CCUG 44356 / LMG 19182 / AMMD) (Burkholderia cepacia (strain AMMD)), this protein is Ribosome maturation factor RimM.